A 369-amino-acid chain; its full sequence is 4-hydroxy-3-methylbut-2-en-1-yl diphosphate synthase (flavodoxin) (369 aa).

The [4Fe-4S] cluster site is built by Cys270, Cys273, Cys305, and Glu312.

Belongs to the IspG family. The cofactor is [4Fe-4S] cluster.

The catalysed reaction is (2E)-4-hydroxy-3-methylbut-2-enyl diphosphate + oxidized [flavodoxin] + H2O + 2 H(+) = 2-C-methyl-D-erythritol 2,4-cyclic diphosphate + reduced [flavodoxin]. The protein operates within isoprenoid biosynthesis; isopentenyl diphosphate biosynthesis via DXP pathway; isopentenyl diphosphate from 1-deoxy-D-xylulose 5-phosphate: step 5/6. In terms of biological role, converts 2C-methyl-D-erythritol 2,4-cyclodiphosphate (ME-2,4cPP) into 1-hydroxy-2-methyl-2-(E)-butenyl 4-diphosphate. In Pseudomonas syringae pv. tomato (strain ATCC BAA-871 / DC3000), this protein is 4-hydroxy-3-methylbut-2-en-1-yl diphosphate synthase (flavodoxin).